Reading from the N-terminus, the 433-residue chain is 3-phosphoshikimate 1-carboxyvinyltransferase (433 aa).

Positions 22, 23, and 27 each coordinate 3-phosphoshikimate. Lysine 22 provides a ligand contact to phosphoenolpyruvate. Phosphoenolpyruvate is bound by residues glycine 95 and arginine 123. 3-phosphoshikimate-binding residues include serine 167, glutamine 169, aspartate 315, and lysine 342. Residue glutamine 169 coordinates phosphoenolpyruvate. The active-site Proton acceptor is the aspartate 315. Arginine 346 and arginine 387 together coordinate phosphoenolpyruvate.

This sequence belongs to the EPSP synthase family. In terms of assembly, monomer.

Its subcellular location is the cytoplasm. It carries out the reaction 3-phosphoshikimate + phosphoenolpyruvate = 5-O-(1-carboxyvinyl)-3-phosphoshikimate + phosphate. The protein operates within metabolic intermediate biosynthesis; chorismate biosynthesis; chorismate from D-erythrose 4-phosphate and phosphoenolpyruvate: step 6/7. In terms of biological role, catalyzes the transfer of the enolpyruvyl moiety of phosphoenolpyruvate (PEP) to the 5-hydroxyl of shikimate-3-phosphate (S3P) to produce enolpyruvyl shikimate-3-phosphate and inorganic phosphate. This Legionella pneumophila (strain Lens) protein is 3-phosphoshikimate 1-carboxyvinyltransferase.